We begin with the raw amino-acid sequence, 231 residues long: Large ribosomal subunit protein uL1 (231 aa).

This sequence belongs to the universal ribosomal protein uL1 family. In terms of assembly, part of the 50S ribosomal subunit.

Its function is as follows. Binds directly to 23S rRNA. The L1 stalk is quite mobile in the ribosome, and is involved in E site tRNA release. In terms of biological role, protein L1 is also a translational repressor protein, it controls the translation of the L11 operon by binding to its mRNA. In Shouchella clausii (strain KSM-K16) (Alkalihalobacillus clausii), this protein is Large ribosomal subunit protein uL1.